The chain runs to 407 residues: Peptidase T (407 aa).

A Zn(2+)-binding site is contributed by H82. Residue D84 is part of the active site. D143 provides a ligand contact to Zn(2+). E177 serves as the catalytic Proton acceptor. Zn(2+)-binding residues include E178, D200, and H382.

This sequence belongs to the peptidase M20B family. Zn(2+) serves as cofactor.

The protein resides in the cytoplasm. It catalyses the reaction Release of the N-terminal residue from a tripeptide.. Functionally, cleaves the N-terminal amino acid of tripeptides. In Streptococcus thermophilus (strain ATCC BAA-491 / LMD-9), this protein is Peptidase T.